Consider the following 256-residue polypeptide: Calsenilin (256 aa).

Residues 1 to 20 (MQPAKEVTKASDGSLLGDLG) form a disordered region. Serine 14 carries the post-translational modification Phosphoserine. A Glycyl lysine isopeptide (Lys-Gly) (interchain with G-Cter in SUMO1) cross-link involves residue lysine 26. S-palmitoyl cysteine attachment occurs at residues cysteine 45 and cysteine 46. Serine 60 is modified (phosphoserine). Serine 63 carries the phosphoserine; by CK1 modification. The EF-hand 1; degenerate domain occupies 67–123 (LELSTVRHQPEGLDQLQAQTKFTKKELQSLYRGFKNECPTGLVDEDTFKLIYAQFFP). Lysine 90 participates in a covalent cross-link: Glycyl lysine isopeptide (Lys-Gly) (interchain with G-Cter in SUMO1). 3 EF-hand domains span residues 126–161 (DATT…LLRG), 162–197 (TVHE…IYDM), and 210–245 (APAE…DENI). Ca(2+) is bound by residues aspartate 175, asparagine 177, aspartate 179, tyrosine 181, glutamate 186, aspartate 223, asparagine 225, aspartate 227, and glutamate 234. Residues 243-256 (ENIMSSMQLFENVI) are interaction with KCND2.

It belongs to the recoverin family. In terms of assembly, binds to DNA as a homomultimer. Dimerization is induced by binding to calcium. Interacts with the C-terminus of PSEN1 and PSEN2 and with PSEN2 CTF subunit. Associates with KCN1. Component of heteromultimeric potassium channels. Identified in potassium channel complexes containing KCND1, KCND2, KCND3, KCNIP1, KCNIP2, KCNIP3, KCNIP4, DPP6 and DPP10. Interacts with KCND2 and KCND3. In terms of processing, palmitoylated. Palmitoylation enhances association with the plasma membrane. Post-translationally, proteolytically cleaved by caspase-3. Phosphorylation at Ser-63 inhibits cleavage by CASP3. In terms of tissue distribution, highly expressed in brain. Widely expressed at lower levels. Expression levels are elevated in brain cortex regions affected by Alzheimer disease.

The protein localises to the cytoplasm. Its subcellular location is the cell membrane. The protein resides in the endoplasmic reticulum. It localises to the golgi apparatus. It is found in the nucleus. Functionally, calcium-dependent transcriptional repressor that binds to the DRE element of genes including PDYN and FOS. Affinity for DNA is reduced upon binding to calcium and enhanced by binding to magnesium. Seems to be involved in nociception. Regulatory subunit of Kv4/D (Shal)-type voltage-gated rapidly inactivating A-type potassium channels, such as KCND2/Kv4.2 and KCND3/Kv4.3. Modulates channel expression at the cell membrane, gating characteristics, inactivation kinetics and rate of recovery from inactivation in a calcium-dependent and isoform-specific manner. In terms of biological role, may play a role in the regulation of PSEN2 proteolytic processing and apoptosis. Together with PSEN2 involved in modulation of amyloid-beta formation. The protein is Calsenilin (KCNIP3) of Homo sapiens (Human).